Reading from the N-terminus, the 205-residue chain is GTP cyclohydrolase-2 (205 aa).

Position 49 to 53 (49 to 53 (RLHSE)) interacts with GTP. Zn(2+) is bound by residues Cys54, Cys65, and Cys67. GTP-binding positions include Gln70, 92–94 (EGR), and Thr114. Asp126 (proton acceptor) is an active-site residue. Arg128 (nucleophile) is an active-site residue. The GTP site is built by Thr149 and Lys154.

This sequence belongs to the GTP cyclohydrolase II family. Requires Zn(2+) as cofactor.

The enzyme catalyses GTP + 4 H2O = 2,5-diamino-6-hydroxy-4-(5-phosphoribosylamino)-pyrimidine + formate + 2 phosphate + 3 H(+). Its pathway is cofactor biosynthesis; riboflavin biosynthesis; 5-amino-6-(D-ribitylamino)uracil from GTP: step 1/4. Functionally, catalyzes the conversion of GTP to 2,5-diamino-6-ribosylamino-4(3H)-pyrimidinone 5'-phosphate (DARP), formate and pyrophosphate. This is GTP cyclohydrolase-2 from Pseudomonas putida (strain ATCC 700007 / DSM 6899 / JCM 31910 / BCRC 17059 / LMG 24140 / F1).